The sequence spans 261 residues: uncharacterized protein (261 aa).

The stretch at 16–147 forms a coiled coil; it reads KQTSLVLQNL…QTNVNVLRSQ (132 aa).

The protein resides in the cytoplasm. This is an uncharacterized protein from Schizosaccharomyces pombe (strain 972 / ATCC 24843) (Fission yeast).